Consider the following 139-residue polypeptide: Peptide methionine sulfoxide reductase MsrB (139 aa).

Residues 17 to 139 (EEQWRRELSP…NSAALKLEPK (123 aa)) enclose the MsrB domain. Positions 56, 59, 105, and 108 each coordinate Zn(2+). Cys128 functions as the Nucleophile in the catalytic mechanism.

The protein belongs to the MsrB Met sulfoxide reductase family. Zn(2+) is required as a cofactor.

The catalysed reaction is L-methionyl-[protein] + [thioredoxin]-disulfide + H2O = L-methionyl-(R)-S-oxide-[protein] + [thioredoxin]-dithiol. The chain is Peptide methionine sulfoxide reductase MsrB from Bradyrhizobium diazoefficiens (strain JCM 10833 / BCRC 13528 / IAM 13628 / NBRC 14792 / USDA 110).